Reading from the N-terminus, the 57-residue chain is uncharacterized protein (57 aa).

Residues 4-26 (FMPIRVFLYSYVIINSLLSSFFH) form a helical membrane-spanning segment.

It localises to the membrane. This is an uncharacterized protein from Saccharomyces cerevisiae (strain ATCC 204508 / S288c) (Baker's yeast).